Reading from the N-terminus, the 556-residue chain is Phenylalanine--tRNA ligase beta subunit (556 aa).

Residues 269–345 form the B5 domain; that stretch reads MEPEEVVYDV…MGYGYERIEP (77 aa). Positions 323, 329, 332, and 333 each coordinate Mg(2+).

It belongs to the phenylalanyl-tRNA synthetase beta subunit family. Type 2 subfamily. Tetramer of two alpha and two beta subunits. The cofactor is Mg(2+).

The protein resides in the cytoplasm. It carries out the reaction tRNA(Phe) + L-phenylalanine + ATP = L-phenylalanyl-tRNA(Phe) + AMP + diphosphate + H(+). This Thermofilum pendens (strain DSM 2475 / Hrk 5) protein is Phenylalanine--tRNA ligase beta subunit.